A 114-amino-acid polypeptide reads, in one-letter code: Large ribosomal subunit protein bL19 (114 aa).

It belongs to the bacterial ribosomal protein bL19 family.

This protein is located at the 30S-50S ribosomal subunit interface and may play a role in the structure and function of the aminoacyl-tRNA binding site. The chain is Large ribosomal subunit protein bL19 (rplS) from Listeria monocytogenes serovar 1/2a (strain ATCC BAA-679 / EGD-e).